Reading from the N-terminus, the 211-residue chain is Ubiquitin-conjugating enzyme E2 S-C (211 aa).

One can recognise a UBC core domain in the interval 11 to 157; the sequence is HIIRRVYKEV…AKLMTEIHAQ (147 aa). The Glycyl thioester intermediate role is filled by cysteine 95. The tract at residues 158-211 is disordered; it reads GSTLRGKDPTDPCSSASATVVSGDGPMAKKHAGDRDKKLAAKKKTDKKRALRRL. Residues 197-211 are compositionally biased toward basic residues; the sequence is AAKKKTDKKRALRRL.

This sequence belongs to the ubiquitin-conjugating enzyme family.

The enzyme catalyses S-ubiquitinyl-[E1 ubiquitin-activating enzyme]-L-cysteine + [E2 ubiquitin-conjugating enzyme]-L-cysteine = [E1 ubiquitin-activating enzyme]-L-cysteine + S-ubiquitinyl-[E2 ubiquitin-conjugating enzyme]-L-cysteine.. Its pathway is protein modification; protein ubiquitination. Catalyzes the covalent attachment of ubiquitin to other proteins. Acts as an essential factor of the anaphase promoting complex/cyclosome (APC/C), a cell cycle-regulated ubiquitin ligase that controls progression through mitosis. Acts by specifically elongating 'Lys-11'-linked polyubiquitin chains initiated by the E2 enzyme ube2c/ubch10 on APC/C substrates, enhancing the degradation of APC/C substrates by the proteasome and promoting mitotic exit. The polypeptide is Ubiquitin-conjugating enzyme E2 S-C (ube2s-c) (Xenopus laevis (African clawed frog)).